The sequence spans 522 residues: Protein DETOXIFICATION 31 (522 aa).

A run of 12 helical transmembrane segments spans residues 89–109 (GAVT…AVSI), 113–133 (VIAG…ETLC), 154–174 (VILS…APIL), 183–203 (ISAM…AYAI), 217–237 (IMVM…FTWL), 249–269 (LALV…VYIF), 299–319 (AAML…AGYL), 324–344 (VSVA…MVAF), 371–391 (VVAV…LLFF), 415–435 (MLAF…VAVG), 441–461 (VVAY…GLLL), and 471–491 (GIWW…TWMI).

Belongs to the multi antimicrobial extrusion (MATE) (TC 2.A.66.1) family.

It is found in the membrane. Functionally, positively mediates root hair elongation. This is Protein DETOXIFICATION 31 from Arabidopsis thaliana (Mouse-ear cress).